The primary structure comprises 276 residues: Hydroxyethylthiazole kinase (276 aa).

The ATP site is built by R126 and S172. Position 199 (G199) interacts with substrate.

This sequence belongs to the Thz kinase family. Requires Mg(2+) as cofactor.

The catalysed reaction is 5-(2-hydroxyethyl)-4-methylthiazole + ATP = 4-methyl-5-(2-phosphooxyethyl)-thiazole + ADP + H(+). It participates in cofactor biosynthesis; thiamine diphosphate biosynthesis; 4-methyl-5-(2-phosphoethyl)-thiazole from 5-(2-hydroxyethyl)-4-methylthiazole: step 1/1. In terms of biological role, catalyzes the phosphorylation of the hydroxyl group of 4-methyl-5-beta-hydroxyethylthiazole (THZ). The sequence is that of Hydroxyethylthiazole kinase from Burkholderia pseudomallei (strain 1710b).